Consider the following 379-residue polypeptide: Serpin B5 (379 aa).

N-linked (GlcNAc...) asparagine glycans are attached at residues asparagine 133, asparagine 176, and asparagine 361.

Belongs to the serpin family. Ov-serpin subfamily.

It localises to the secreted. It is found in the extracellular space. May not exhibit serine protease inhibitory activity. The protein is Serpin B5 (serpinb5) of Xenopus tropicalis (Western clawed frog).